Reading from the N-terminus, the 448-residue chain is MTFKVIIVGGGPVGLYMAHAFERANIDYVILEQQDTVLNISGQLLFTWPQTVRLFDQIGLLADLENVALGIHHKKRLFGDNGQVTTTSNFWDAMQDNHGYPFLPLLRSELVKILYNHLKGRESNIRVNSRVTDIRPHATGVHVHLADGSLIQGSIVVGADGVHSRTRQIMDSLVAQHALNPARLANKPMVSTFYGIFGRASNVDLGIEPEVFFESRGGGGEGGAVVQCLATKDIVQFVTLKPLPGGPTSERSPRYSDEEMDAYAASLADVAVCPGVKFGDVWAKVQRKSTRMLNQEEGFLDNWFFDRIVLVGDAVHKSTSVNGLGMTCGLHSGAVLANELHSLLSRQREKEEEPSTEELEGAFGRYQEDRKTEVKPIWNGGHAMIREVVKKGWVSWFWDRFVLPWCDMETFAKGLLVSVLLIRQGQILRFVPFEGRGGRVPWARKVVV.

Residues E32 and R107 each coordinate FAD. Q227 is a catalytic residue. D313 is a binding site for FAD.

The protein belongs to the paxM FAD-dependent monooxygenase family. The cofactor is FAD.

Highly reducing polyketide synthase; part of the gene cluster that mediates the biosynthesis of sordarial, a salicylic aldehyde structurally related to the phytotoxin pyriculol. The most interesting aspect of this pathway is formation of an aromatic product from the highly reducing polyketide synthase srdA. SrdA synthesizes a reduced polyketide chain from one molecule of acetyl-CoA and five molecules of malonyl-CoA. The polyketide chain is then reductively released as an aldehyde. The oxidoreductases srdC, srdD and srdE then oxidize one of the hydroxy groups to facilitate the intramolecular aldol condensation, followed by dehydration to yield a salicylic aldehyde. This aldehyde can undergo facile reduction by endogenous reductases to yield the alcohol 1-hydroxy-2-hydroxymethyl-3-pent-1,3-dienylbenzene. The flavin-dependent srdI counteract against the propensity of the aldehydes to be reduced under physiological conditions and is responsible for reoxidizing 1-hydroxy-2-hydroxymethyl-3-pent-1,3-dienylbenzene back to the salicylic aldehyde. This salicylic aldehyde is then selectively epoxidized by the cupin-domain-containing oxidoreductase srdB to yield the epoxide, which can be hydrolyzed stereoselectively by the hydrolase srdG to give the final product sordarial. The sequence is that of FAD-dependent monooxygenase srdH from Neurospora crassa (strain ATCC 24698 / 74-OR23-1A / CBS 708.71 / DSM 1257 / FGSC 987).